Reading from the N-terminus, the 316-residue chain is MQEFSLWCDFIERDFLENDFLKLINKGAICGATSNPSLFCEAITKSAFYKDEIAKLKGKKAKEIYETLALKDILQASSALMPLYEKDPNNGYISLEIDPFLEDDAPKSIDEAKRLFKTLNRPNVMIKVPASESGLEVVSALTKASIPVNATLVFSPKIARKTAQILAKEAQKRAVISVFVSRFDKEIDPLVPKNLQAKSGIINATECYYQINQHANKLTSALFASTGVKSNTLAKGYYIKALCFKNSINTAPLEALNAYLLDPNTEYQTPLKITEIEAFKKELKACNIDLENTAQKLLKEGLIAFKQSFEKLLSSF.

Residue K127 is the Schiff-base intermediate with substrate of the active site.

The protein belongs to the transaldolase family. Type 2 subfamily.

The protein resides in the cytoplasm. It catalyses the reaction D-sedoheptulose 7-phosphate + D-glyceraldehyde 3-phosphate = D-erythrose 4-phosphate + beta-D-fructose 6-phosphate. Its pathway is carbohydrate degradation; pentose phosphate pathway; D-glyceraldehyde 3-phosphate and beta-D-fructose 6-phosphate from D-ribose 5-phosphate and D-xylulose 5-phosphate (non-oxidative stage): step 2/3. Transaldolase is important for the balance of metabolites in the pentose-phosphate pathway. This Helicobacter pylori (strain Shi470) protein is Transaldolase.